The chain runs to 153 residues: MSLDLALDVQYATASDYLPSEEQFSLWVKTAIGNSMEQAELTIRIVDARESQMLNSTYRGKDKPTNVLSFPFEAPPEIELPLLGDLVICAAVVENEAREQDKILEAHWAHMVVHGCLHLLGYDHIEDEEAEEMESLETQLIESLGFTDPYKEQ.

Positions 114, 118, and 124 each coordinate Zn(2+).

Belongs to the endoribonuclease YbeY family. It depends on Zn(2+) as a cofactor.

The protein resides in the cytoplasm. Functionally, single strand-specific metallo-endoribonuclease involved in late-stage 70S ribosome quality control and in maturation of the 3' terminus of the 16S rRNA. The sequence is that of Endoribonuclease YbeY from Shewanella sp. (strain MR-7).